The primary structure comprises 297 residues: Small ribosomal subunit biogenesis GTPase RsgA (297 aa).

The CP-type G domain maps to 65–223 (RNELVRPPVA…VADTPGFSAI (159 aa)). Residues 114–117 (TKVD) and 166–174 (GQSGAGKST) contribute to the GTP site. 4 residues coordinate Zn(2+): Cys247, Cys252, His254, and Cys260.

Belongs to the TRAFAC class YlqF/YawG GTPase family. RsgA subfamily. As to quaternary structure, monomer. Associates with 30S ribosomal subunit, binds 16S rRNA. Zn(2+) is required as a cofactor.

The protein resides in the cytoplasm. One of several proteins that assist in the late maturation steps of the functional core of the 30S ribosomal subunit. Helps release RbfA from mature subunits. May play a role in the assembly of ribosomal proteins into the subunit. Circularly permuted GTPase that catalyzes slow GTP hydrolysis, GTPase activity is stimulated by the 30S ribosomal subunit. The sequence is that of Small ribosomal subunit biogenesis GTPase RsgA from Enterococcus faecalis (strain ATCC 700802 / V583).